The primary structure comprises 542 residues: Probable cysteine proteinase 361L (542 aa).

Catalysis depends on residues Cys172, His382, and Asn414. The chain crosses the membrane as a helical span at residues 520–540; it reads TNNWYIYALIIIFILIIFFVL.

This sequence belongs to the peptidase C1 family.

It localises to the membrane. Its function is as follows. Probable cysteine protease. The polypeptide is Probable cysteine proteinase 361L (Acheta domesticus (House cricket)).